The chain runs to 385 residues: Succinate--CoA ligase [ADP-forming] subunit beta (385 aa).

An ATP-grasp domain is found at 9–244 (KALFRTFGVP…LDEEDPLEVE (236 aa)). Residues Lys46, 53-55 (GRG), Glu99, Gln102, and Glu107 each bind ATP. Mg(2+)-binding residues include Asn199 and Asp213. Substrate-binding positions include Asn264 and 321–323 (GIL).

The protein belongs to the succinate/malate CoA ligase beta subunit family. As to quaternary structure, heterotetramer of two alpha and two beta subunits. Mg(2+) is required as a cofactor.

The catalysed reaction is succinate + ATP + CoA = succinyl-CoA + ADP + phosphate. The enzyme catalyses GTP + succinate + CoA = succinyl-CoA + GDP + phosphate. The protein operates within carbohydrate metabolism; tricarboxylic acid cycle; succinate from succinyl-CoA (ligase route): step 1/1. In terms of biological role, succinyl-CoA synthetase functions in the citric acid cycle (TCA), coupling the hydrolysis of succinyl-CoA to the synthesis of either ATP or GTP and thus represents the only step of substrate-level phosphorylation in the TCA. The beta subunit provides nucleotide specificity of the enzyme and binds the substrate succinate, while the binding sites for coenzyme A and phosphate are found in the alpha subunit. The chain is Succinate--CoA ligase [ADP-forming] subunit beta from Desulforapulum autotrophicum (strain ATCC 43914 / DSM 3382 / VKM B-1955 / HRM2) (Desulfobacterium autotrophicum).